The sequence spans 494 residues: Ribonuclease H (494 aa).

Disordered stretches follow at residues 79–148 (NRRR…APPP) and 205–231 (RSGL…VGLR). Composition is skewed to polar residues over residues 84-100 (GSTS…NQLA) and 131-143 (PTTS…TRTS). The region spanning 272–488 (SSVPQVVYVD…ADVLAVAGAR (217 aa)) is the RNase H type-1 domain. Positions 281, 325, 374, and 480 each coordinate Mg(2+).

This sequence belongs to the RNase H family. As to quaternary structure, monomer. The cofactor is Mg(2+).

The enzyme catalyses Endonucleolytic cleavage to 5'-phosphomonoester.. Functionally, endonuclease that specifically degrades the RNA of RNA-DNA hybrids. This chain is Ribonuclease H (RNH1), found in Crithidia fasciculata.